Consider the following 314-residue polypeptide: L-lactate dehydrogenase (314 aa).

Residues Val17, Asp38, Lys43, Tyr69, and 83 to 84 contribute to the NAD(+) site; that span reads GA. Residues Gln86 and Arg92 each coordinate substrate. NAD(+) contacts are provided by residues Ser105, 122–124, and Ser147; that span reads ASN. 124 to 127 provides a ligand contact to substrate; it reads NPVD. 152–155 lines the substrate pocket; sequence DSAR. Residues Arg157 and His172 each contribute to the beta-D-fructose 1,6-bisphosphate site. His179 acts as the Proton acceptor in catalysis. Tyr223 carries the post-translational modification Phosphotyrosine. Residue Thr232 coordinates substrate.

This sequence belongs to the LDH/MDH superfamily. LDH family. As to quaternary structure, homotetramer.

It is found in the cytoplasm. It catalyses the reaction (S)-lactate + NAD(+) = pyruvate + NADH + H(+). The protein operates within fermentation; pyruvate fermentation to lactate; (S)-lactate from pyruvate: step 1/1. Allosterically activated by fructose 1,6-bisphosphate (FBP). Catalyzes the conversion of lactate to pyruvate. The sequence is that of L-lactate dehydrogenase from Corynebacterium glutamicum (strain R).